The chain runs to 232 residues: MAKKGKKYVEAAKLIERTKAYDVAEAVSLTKKANTAKFDATVEVAFRLGVDPRKNDQQIRGAVVLPNGTGKTQRVLVFAKGEKAKEAEAAGADYVGDSDYITKIQQGWFEFDVIVATPDMMGEVGKIGRVLGPKGLMPNPKTGTVTFEVEKAINEIKAGKVEYRVDKAGNIHAPIGKVSFEDEKLVENFATIYDTILKAKPAAAKGVYVKNVSVTSTMGPGVKVDPSSFSAK.

The protein belongs to the universal ribosomal protein uL1 family. Part of the 50S ribosomal subunit.

In terms of biological role, binds directly to 23S rRNA. The L1 stalk is quite mobile in the ribosome, and is involved in E site tRNA release. Protein L1 is also a translational repressor protein, it controls the translation of the L11 operon by binding to its mRNA. This Bacillus pumilus (strain SAFR-032) protein is Large ribosomal subunit protein uL1.